Consider the following 846-residue polypeptide: Outer membrane channel protein CpnT (846 aa).

Positions Met1 to Leu443 are NTD. A disordered region spans residues Arg442–Ala630. 2 stretches are compositionally biased toward pro residues: residues Leu450–Ile466 and Ala475–Asp504. Low complexity-rich tracts occupy residues Glu508–Ala517 and Ala562–Pro586. The segment at Arg651 to Gln846 is TNT. A TNT domain is found at Tyr751 to Gln846. Residue Arg757 is part of the active site. Arg780 contributes to the NAD(+) binding site. Gln822 is a catalytic residue.

As to quaternary structure, interacts with the immunity factor for TNT (IFT) homolog. In terms of processing, the C-terminal domain (TNT) is probably cleaved.

It localises to the cell outer membrane. The protein localises to the secreted. It is found in the cell surface. It carries out the reaction NAD(+) + H2O = ADP-D-ribose + nicotinamide + H(+). Glycohydrolase activity is completely inhibited by interaction with the immunity factor for TNT (IFT) homolog. This inhibition protects M.bovis from self-poisoning. In terms of biological role, the N-terminal domain (NTD) forms an outer membrane channel and is used for uptake of nutrients across the outer membrane. Also confers susceptibility to structurally different antibiotics and antituberculosis drugs, and to toxic immune factors such as nitric oxide (NO). The C-terminal domain (TNT) is dispensable for normal growth in macrophages. This chain is Outer membrane channel protein CpnT, found in Mycobacterium bovis (strain BCG / Pasteur 1173P2).